A 224-amino-acid polypeptide reads, in one-letter code: 7-cyano-7-deazaguanine synthase (224 aa).

8 to 18 is an ATP binding site; that stretch reads LSGGMDSAAVI. Positions 186, 196, 199, and 202 each coordinate Zn(2+).

This sequence belongs to the QueC family. Requires Zn(2+) as cofactor.

It carries out the reaction 7-carboxy-7-deazaguanine + NH4(+) + ATP = 7-cyano-7-deazaguanine + ADP + phosphate + H2O + H(+). It participates in purine metabolism; 7-cyano-7-deazaguanine biosynthesis. Functionally, catalyzes the ATP-dependent conversion of 7-carboxy-7-deazaguanine (CDG) to 7-cyano-7-deazaguanine (preQ(0)). This is 7-cyano-7-deazaguanine synthase from Xanthomonas oryzae pv. oryzae (strain MAFF 311018).